The primary structure comprises 1020 residues: DNA-directed RNA polymerase 2, chloroplastic/mitochondrial (1020 aa).

The tract at residues 314-336 (KKQKAEKDKQKEDGEHVTQEQEK) is disordered. Catalysis depends on residues Asp-721, Lys-796, and Asp-953.

It belongs to the phage and mitochondrial RNA polymerase family. As to expression, the highest levels of expression are detected in the mature leaves. The level of expression is lowest in the cotyledons.

The protein localises to the plastid. It localises to the chloroplast. The protein resides in the mitochondrion. It carries out the reaction RNA(n) + a ribonucleoside 5'-triphosphate = RNA(n+1) + diphosphate. In terms of biological role, DNA-dependent RNA polymerase catalyzes the transcription of DNA into RNA using the four ribonucleoside triphosphates as substrates. This Nicotiana sylvestris (Wood tobacco) protein is DNA-directed RNA polymerase 2, chloroplastic/mitochondrial (RPOT2).